We begin with the raw amino-acid sequence, 302 residues long: tRNA pseudouridine synthase B (302 aa).

Aspartate 43 acts as the Nucleophile in catalysis.

This sequence belongs to the pseudouridine synthase TruB family. Type 1 subfamily.

It carries out the reaction uridine(55) in tRNA = pseudouridine(55) in tRNA. In terms of biological role, responsible for synthesis of pseudouridine from uracil-55 in the psi GC loop of transfer RNAs. The chain is tRNA pseudouridine synthase B from Burkholderia pseudomallei (strain 668).